A 593-amino-acid chain; its full sequence is Elongation factor 4 (593 aa).

Positions 2–181 (DKIRNFCIIA…AVIERIPHPQ (180 aa)) constitute a tr-type G domain. Residues 14-19 (DHGKST) and 128-131 (NKCD) contribute to the GTP site.

The protein belongs to the TRAFAC class translation factor GTPase superfamily. Classic translation factor GTPase family. LepA subfamily.

Its subcellular location is the cell inner membrane. It catalyses the reaction GTP + H2O = GDP + phosphate + H(+). Its function is as follows. Required for accurate and efficient protein synthesis under certain stress conditions. May act as a fidelity factor of the translation reaction, by catalyzing a one-codon backward translocation of tRNAs on improperly translocated ribosomes. Back-translocation proceeds from a post-translocation (POST) complex to a pre-translocation (PRE) complex, thus giving elongation factor G a second chance to translocate the tRNAs correctly. Binds to ribosomes in a GTP-dependent manner. The protein is Elongation factor 4 of Bacteroides fragilis (strain ATCC 25285 / DSM 2151 / CCUG 4856 / JCM 11019 / LMG 10263 / NCTC 9343 / Onslow / VPI 2553 / EN-2).